Here is a 356-residue protein sequence, read N- to C-terminus: Uroporphyrinogen decarboxylase (356 aa).

Substrate is bound by residues 27–31, Asp77, Tyr154, Thr209, and His327; that span reads RQAGR.

It belongs to the uroporphyrinogen decarboxylase family. Homodimer.

The protein resides in the cytoplasm. It carries out the reaction uroporphyrinogen III + 4 H(+) = coproporphyrinogen III + 4 CO2. It participates in porphyrin-containing compound metabolism; protoporphyrin-IX biosynthesis; coproporphyrinogen-III from 5-aminolevulinate: step 4/4. In terms of biological role, catalyzes the decarboxylation of four acetate groups of uroporphyrinogen-III to yield coproporphyrinogen-III. In Hahella chejuensis (strain KCTC 2396), this protein is Uroporphyrinogen decarboxylase.